The primary structure comprises 574 residues: Amino-acid acetyltransferase, mitochondrial (574 aa).

The transit peptide at Met-1 to Asp-13 directs the protein to the mitochondrion. An N-acetyltransferase domain is found at Lys-392 to Val-560.

Belongs to the acetyltransferase family. Interacts with the acetylglutamate kinase chain of AGR5,6.

It localises to the mitochondrion. The enzyme catalyses L-glutamate + acetyl-CoA = N-acetyl-L-glutamate + CoA + H(+). Its pathway is amino-acid biosynthesis; L-arginine biosynthesis; N(2)-acetyl-L-ornithine from L-glutamate: step 1/4. With respect to regulation, feedback inhibition by L-arginine. Its function is as follows. N-acetylglutamate synthase involved in arginine biosynthesis. This is Amino-acid acetyltransferase, mitochondrial (ARG2) from Saccharomyces cerevisiae (strain YJM789) (Baker's yeast).